A 559-amino-acid chain; its full sequence is Formate--tetrahydrofolate ligase (559 aa).

68-75 (TPAGEGKT) is a binding site for ATP.

This sequence belongs to the formate--tetrahydrofolate ligase family.

It catalyses the reaction (6S)-5,6,7,8-tetrahydrofolate + formate + ATP = (6R)-10-formyltetrahydrofolate + ADP + phosphate. The protein operates within one-carbon metabolism; tetrahydrofolate interconversion. This Rhizobium etli (strain CIAT 652) protein is Formate--tetrahydrofolate ligase.